The sequence spans 193 residues: Probable chorismate pyruvate-lyase (193 aa).

3 residues coordinate substrate: Arg-81, Leu-119, and Glu-177.

Belongs to the UbiC family.

It localises to the cytoplasm. It carries out the reaction chorismate = 4-hydroxybenzoate + pyruvate. Its pathway is cofactor biosynthesis; ubiquinone biosynthesis. In terms of biological role, removes the pyruvyl group from chorismate, with concomitant aromatization of the ring, to provide 4-hydroxybenzoate (4HB) for the ubiquinone pathway. This Idiomarina loihiensis (strain ATCC BAA-735 / DSM 15497 / L2-TR) protein is Probable chorismate pyruvate-lyase.